Here is a 331-residue protein sequence, read N- to C-terminus: Glycerol-3-phosphate dehydrogenase [NAD(P)+] (331 aa).

Positions 11, 30, and 105 each coordinate NADPH. Sn-glycerol 3-phosphate contacts are provided by K105, G134, and S136. A138 contributes to the NADPH binding site. Sn-glycerol 3-phosphate-binding residues include K189, D242, S252, R253, and N254. The Proton acceptor role is filled by K189. R253 contributes to the NADPH binding site. Residues V277 and E279 each contribute to the NADPH site.

The protein belongs to the NAD-dependent glycerol-3-phosphate dehydrogenase family.

The protein localises to the cytoplasm. It carries out the reaction sn-glycerol 3-phosphate + NAD(+) = dihydroxyacetone phosphate + NADH + H(+). The catalysed reaction is sn-glycerol 3-phosphate + NADP(+) = dihydroxyacetone phosphate + NADPH + H(+). Its pathway is membrane lipid metabolism; glycerophospholipid metabolism. Catalyzes the reduction of the glycolytic intermediate dihydroxyacetone phosphate (DHAP) to sn-glycerol 3-phosphate (G3P), the key precursor for phospholipid synthesis. This Herminiimonas arsenicoxydans protein is Glycerol-3-phosphate dehydrogenase [NAD(P)+].